Here is a 531-residue protein sequence, read N- to C-terminus: Pancreatic secretory granule membrane major glycoprotein GP2 (531 aa).

A signal peptide spans 1 to 21; the sequence is MVGCDLLWLAAASCVLTLVSP. A glycan (N-linked (GlcNAc...) asparagine) is linked at Asn-33. Positions 34–53 are beta hairpin; it reads SSNLDLDCGSPDSPSSGICF. Disulfide bonds link Cys-41-Cys-52, Cys-56-Cys-151, Cys-79-Cys-169, Cys-101-Cys-139, Cys-107-Cys-174, Cys-132-Cys-140, Cys-184-Cys-194, Cys-188-Cys-203, Cys-205-Cys-235, Cys-223-Cys-314, and Cys-255-Cys-278. The D10C stretch occupies residues 54 to 74; it reads DPCQNHTVLNDPTRSTENNDS. Asn-58 and Asn-72 each carry an N-linked (GlcNAc...) asparagine glycan. One can recognise an EGF-like domain in the interval 180 to 224; that stretch reads APKNCEITCRPEEECVFQNNNWSCVCRQDLHVSDSQSLQPLLDCG. N-linked (GlcNAc...) asparagine glycosylation occurs at Asn-200. A ZP-N region spans residues 222 to 315; it reads DCGDNEIKVK…FRVNVNFQCA (94 aa). The 257-residue stretch at 222–478 folds into the ZP domain; it reads DCGDNEIKVK…PSCSTNRLRS (257 aa). N-linked (GlcNAc...) asparagine glycans are attached at residues Asn-256 and Asn-285. The segment at 316–339 is flexible ZP-N/ZP-C linker; sequence YPLDMSVSLETALQPIVSSLTVDV. An internal hydrophobic patch (IHP) region spans residues 340-351; the sequence is DGAGEFNVKMAL. The tract at residues 340 to 478 is ZP-C; it reads DGAGEFNVKM…PSCSTNRLRS (139 aa). 3 cysteine pairs are disulfide-bonded: Cys-395–Cys-455, Cys-416–Cys-471, and Cys-460–Cys-467. The segment at 485–493 is external hydrophobic patch (EHP); it reads YNRVLDLGP.

In terms of assembly, interacts with SYCN. Interacts with bacterial adhesin fimH. In terms of processing, N-glycosylated. Specifically expressed by M (microfold) cells which are atypical epithelial cells of the intestine.

It is found in the zymogen granule membrane. It localises to the secreted. Its subcellular location is the cell membrane. The protein localises to the apical cell membrane. The protein resides in the membrane raft. It is found in the endosome. Functionally, functions as an intestinal M-cell transcytotic receptor specific of type-I-piliated bacteria that participates in the mucosal immune response toward these bacteria. At the apical membrane of M-cells it binds fimH, a protein of the bacteria type I pilus tip. Internalizes bound bacteria, like E.coli and S.typhimurium, from the lumen of the intestine and delivers them, through M-cells, to the underlying organized lymphoid follicles where they are captured by antigen-presenting dendritic cells to elicit a mucosal immune response. This Mus musculus (Mouse) protein is Pancreatic secretory granule membrane major glycoprotein GP2.